The following is a 142-amino-acid chain: Transcriptional regulator MraZ (142 aa).

SpoVT-AbrB domains follow at residues 5 to 47 (EYPY…PLPG) and 76 to 119 (ASKA…NPQR).

It belongs to the MraZ family. Forms oligomers.

The protein resides in the cytoplasm. It localises to the nucleoid. The chain is Transcriptional regulator MraZ from Deinococcus radiodurans (strain ATCC 13939 / DSM 20539 / JCM 16871 / CCUG 27074 / LMG 4051 / NBRC 15346 / NCIMB 9279 / VKM B-1422 / R1).